A 118-amino-acid polypeptide reads, in one-letter code: Large ribosomal subunit protein uL22 (118 aa).

Belongs to the universal ribosomal protein uL22 family. In terms of assembly, part of the 50S ribosomal subunit.

This protein binds specifically to 23S rRNA; its binding is stimulated by other ribosomal proteins, e.g. L4, L17, and L20. It is important during the early stages of 50S assembly. It makes multiple contacts with different domains of the 23S rRNA in the assembled 50S subunit and ribosome. Its function is as follows. The globular domain of the protein is located near the polypeptide exit tunnel on the outside of the subunit, while an extended beta-hairpin is found that lines the wall of the exit tunnel in the center of the 70S ribosome. This chain is Large ribosomal subunit protein uL22, found in Chlorobium limicola (strain DSM 245 / NBRC 103803 / 6330).